The sequence spans 269 residues: Elongation factor Ts (269 aa).

Positions 76 to 79 (TDFV) are involved in Mg(2+) ion dislocation from EF-Tu.

The protein belongs to the EF-Ts family.

Its subcellular location is the cytoplasm. Its function is as follows. Associates with the EF-Tu.GDP complex and induces the exchange of GDP to GTP. It remains bound to the aminoacyl-tRNA.EF-Tu.GTP complex up to the GTP hydrolysis stage on the ribosome. This Deinococcus geothermalis (strain DSM 11300 / CIP 105573 / AG-3a) protein is Elongation factor Ts.